The primary structure comprises 307 residues: MAAITASMVAELRGKTDAPMMECKRALTEAQGDMVKAEELLRVKLGSKAGKAAGRITAEGVITSYMEADVGALLEVNCETDFVTKNDSFLALANAAVKLIAQNNPADLAALAALPYTQDGFGPTLEDVRKGLIGKIGENMSFRRFKRFASGAKLASYLHGTRIGVVVEFDGDATAAKDVAMHVAAMKPVALSSDDVPAELVARERSVAAAKAAEDASVATAAGKPVQSAEIVAKRIEGGVQKYLKEVSLFNQSFVKNDKQTVEQMLKATGTTVKAFTLYVVGEGIEKKVEDFAAEVAAQMAAAKQAS.

The tract at residues 80 to 83 (TDFV) is involved in Mg(2+) ion dislocation from EF-Tu.

It belongs to the EF-Ts family.

The protein resides in the cytoplasm. In terms of biological role, associates with the EF-Tu.GDP complex and induces the exchange of GDP to GTP. It remains bound to the aminoacyl-tRNA.EF-Tu.GTP complex up to the GTP hydrolysis stage on the ribosome. The protein is Elongation factor Ts of Albidiferax ferrireducens (strain ATCC BAA-621 / DSM 15236 / T118) (Rhodoferax ferrireducens).